We begin with the raw amino-acid sequence, 557 residues long: Formate--tetrahydrofolate ligase (557 aa).

67–74 is an ATP binding site; sequence TPAGEGKT.

This sequence belongs to the formate--tetrahydrofolate ligase family.

It catalyses the reaction (6S)-5,6,7,8-tetrahydrofolate + formate + ATP = (6R)-10-formyltetrahydrofolate + ADP + phosphate. It participates in one-carbon metabolism; tetrahydrofolate interconversion. This chain is Formate--tetrahydrofolate ligase, found in Cereibacter sphaeroides (strain ATCC 17029 / ATH 2.4.9) (Rhodobacter sphaeroides).